The chain runs to 307 residues: tRNA dimethylallyltransferase 2 (307 aa).

9 to 16 (GPTAVGKT) lines the ATP pocket. 11 to 16 (TAVGKT) contributes to the substrate binding site. The interaction with substrate tRNA stretch occupies residues 34 to 37 (DSRQ).

It belongs to the IPP transferase family. Monomer. Requires Mg(2+) as cofactor.

The catalysed reaction is adenosine(37) in tRNA + dimethylallyl diphosphate = N(6)-dimethylallyladenosine(37) in tRNA + diphosphate. Its function is as follows. Catalyzes the transfer of a dimethylallyl group onto the adenine at position 37 in tRNAs that read codons beginning with uridine, leading to the formation of N6-(dimethylallyl)adenosine (i(6)A). The sequence is that of tRNA dimethylallyltransferase 2 from Azobacteroides pseudotrichonymphae genomovar. CFP2.